Consider the following 280-residue polypeptide: NAD kinase (280 aa).

Aspartate 67 (proton acceptor) is an active-site residue. NAD(+)-binding positions include 67 to 68 (DG), arginine 72, 138 to 139 (ND), aspartate 167, alanine 175, 178 to 183 (TAYSLS), and glutamine 237.

Belongs to the NAD kinase family. A divalent metal cation is required as a cofactor.

The protein localises to the cytoplasm. The enzyme catalyses NAD(+) + ATP = ADP + NADP(+) + H(+). Involved in the regulation of the intracellular balance of NAD and NADP, and is a key enzyme in the biosynthesis of NADP. Catalyzes specifically the phosphorylation on 2'-hydroxyl of the adenosine moiety of NAD to yield NADP. This Aeropyrum pernix (strain ATCC 700893 / DSM 11879 / JCM 9820 / NBRC 100138 / K1) protein is NAD kinase.